We begin with the raw amino-acid sequence, 244 residues long: Orotidine 5'-phosphate decarboxylase (244 aa).

Residues Asp18, Lys43, Asp73–Ile82, Ser130, Pro182–Gly192, Gly206, and Arg207 each bind substrate. The Proton donor role is filled by Lys75.

The protein belongs to the OMP decarboxylase family. Type 1 subfamily. In terms of assembly, homodimer.

The enzyme catalyses orotidine 5'-phosphate + H(+) = UMP + CO2. Its pathway is pyrimidine metabolism; UMP biosynthesis via de novo pathway; UMP from orotate: step 2/2. Functionally, catalyzes the decarboxylation of orotidine 5'-monophosphate (OMP) to uridine 5'-monophosphate (UMP). This is Orotidine 5'-phosphate decarboxylase from Aeropyrum pernix (strain ATCC 700893 / DSM 11879 / JCM 9820 / NBRC 100138 / K1).